Here is a 251-residue protein sequence, read N- to C-terminus: Putative (5-formylfuran-3-yl)methyl phosphate synthase (251 aa).

Lys29 functions as the Schiff-base intermediate with substrate in the catalytic mechanism. The Proton acceptor role is filled by Lys87.

It belongs to the MfnB family.

The enzyme catalyses 2 D-glyceraldehyde 3-phosphate = 4-(hydroxymethyl)-2-furancarboxaldehyde phosphate + phosphate + 2 H2O. In terms of biological role, catalyzes the formation of 4-(hydroxymethyl)-2-furancarboxaldehyde phosphate (4-HFC-P) from two molecules of glyceraldehyde-3-P (GA-3-P). The protein is Putative (5-formylfuran-3-yl)methyl phosphate synthase of Kitasatospora aureofaciens (Streptomyces aureofaciens).